We begin with the raw amino-acid sequence, 422 residues long: Sphingomyelin phosphodiesterase 2 (422 aa).

Glu-49 contributes to the Mg(2+) binding site. His-272 acts as the Proton acceptor in catalysis. 2 consecutive transmembrane segments (helical) span residues 325–345 (ALFG…CVLA) and 354–374 (AIML…VYLF). Positions 397–422 (TETQDLGSEPHPTHCRQQEADRAEEK) are disordered. The segment covering 412 to 422 (RQQEADRAEEK) has biased composition (basic and acidic residues).

This sequence belongs to the neutral sphingomyelinase family. Mg(2+) serves as cofactor.

The protein localises to the membrane. It carries out the reaction a sphingomyelin + H2O = phosphocholine + an N-acylsphing-4-enine + H(+). It catalyses the reaction 1-O-octadecyl-sn-glycero-3-phosphocholine + H2O = 1-O-octadecyl-sn-glycerol + phosphocholine + H(+). The enzyme catalyses an N-(acyl)-sphingosylphosphocholine + H2O = an N-acyl-sphingoid base + phosphocholine + H(+). The catalysed reaction is 1-hexadecanoyl-sn-glycero-3-phosphocholine + H2O = 1-hexadecanoyl-sn-glycerol + phosphocholine + H(+). It carries out the reaction a sphingosylphosphocholine + H2O = a sphingoid base + phosphocholine + H(+). It catalyses the reaction 1-O-hexadecyl-sn-glycero-3-phosphocholine + H2O = 1-O-hexadecyl-sn-glycerol + phosphocholine + H(+). It participates in lipid metabolism; sphingolipid metabolism. Catalyzes the hydrolysis of sphingomyelin to form ceramide and phosphocholine. Ceramide mediates numerous cellular functions, such as apoptosis and growth arrest, and is capable of regulating these 2 cellular events independently. Also hydrolyzes sphingosylphosphocholine. Hydrolyze 1-acyl-2-lyso-sn-glycero-3-phosphocholine (lyso-PC) and 1-O-alkyl-2-lyso-sn-glycero-3-phosphocholine (lyso-platelet-activating factor). This chain is Sphingomyelin phosphodiesterase 2 (Smpd2), found in Rattus norvegicus (Rat).